A 112-amino-acid polypeptide reads, in one-letter code: UPF0060 membrane protein XOO1694 (112 aa).

The next 4 helical transmembrane spans lie at 8-28, 32-52, 62-82, and 92-112; these read LLLF…PYLW, GGSV…VWLL, VYAA…LWWV, and LLGA…PRSA.

The protein belongs to the UPF0060 family.

Its subcellular location is the cell inner membrane. In Xanthomonas oryzae pv. oryzae (strain MAFF 311018), this protein is UPF0060 membrane protein XOO1694.